We begin with the raw amino-acid sequence, 268 residues long: Small ribosomal subunit protein uS3 (268 aa).

Residues 39–107 (VREYLKKKLK…PVHVNIEEIR (69 aa)) enclose the KH type-2 domain. Residues 216–268 (VEEVAEEKRPRRNARPGGDRRPRRDGEGGGPAGARRGAPRRAGGAGGDGKTGE) are disordered. Residues 232–242 (GGDRRPRRDGE) show a composition bias toward basic and acidic residues. A compositionally biased stretch (low complexity) spans 248-257 (GARRGAPRRA). Gly residues predominate over residues 258 to 268 (GGAGGDGKTGE).

Belongs to the universal ribosomal protein uS3 family. Part of the 30S ribosomal subunit. Forms a tight complex with proteins S10 and S14.

Its function is as follows. Binds the lower part of the 30S subunit head. Binds mRNA in the 70S ribosome, positioning it for translation. In Paraburkholderia phytofirmans (strain DSM 17436 / LMG 22146 / PsJN) (Burkholderia phytofirmans), this protein is Small ribosomal subunit protein uS3.